A 302-amino-acid chain; its full sequence is Bifunctional ligase/repressor BirA (302 aa).

A DNA-binding region (H-T-H motif) is located at residues 14 to 33; it reads QPKVRSELEKFSKNLEEDIQ. One can recognise a BPL/LPL catalytic domain in the interval 62-236; sequence QISTALFPYS…HLYTRLNIFE (175 aa). Residues 80–82, Gln-103, 107–109, and Lys-167 each bind biotin; these read STN and RGR.

The protein belongs to the biotin--protein ligase family.

It carries out the reaction biotin + L-lysyl-[protein] + ATP = N(6)-biotinyl-L-lysyl-[protein] + AMP + diphosphate + H(+). Its function is as follows. Acts both as a biotin--[acetyl-CoA-carboxylase] ligase and a biotin-operon repressor. In the presence of ATP, BirA activates biotin to form the BirA-biotinyl-5'-adenylate (BirA-bio-5'-AMP or holoBirA) complex. HoloBirA can either transfer the biotinyl moiety to the biotin carboxyl carrier protein (BCCP) subunit of acetyl-CoA carboxylase, or bind to the biotin operator site and inhibit transcription of the operon. The sequence is that of Bifunctional ligase/repressor BirA from Haemophilus influenzae (strain ATCC 51907 / DSM 11121 / KW20 / Rd).